The sequence spans 361 residues: S-adenosylmethionine:tRNA ribosyltransferase-isomerase (361 aa).

This sequence belongs to the QueA family. Monomer.

It is found in the cytoplasm. It carries out the reaction 7-aminomethyl-7-carbaguanosine(34) in tRNA + S-adenosyl-L-methionine = epoxyqueuosine(34) in tRNA + adenine + L-methionine + 2 H(+). Its pathway is tRNA modification; tRNA-queuosine biosynthesis. Functionally, transfers and isomerizes the ribose moiety from AdoMet to the 7-aminomethyl group of 7-deazaguanine (preQ1-tRNA) to give epoxyqueuosine (oQ-tRNA). This Methylocella silvestris (strain DSM 15510 / CIP 108128 / LMG 27833 / NCIMB 13906 / BL2) protein is S-adenosylmethionine:tRNA ribosyltransferase-isomerase.